Reading from the N-terminus, the 276-residue chain is 2-dehydro-3-deoxyphosphooctonate aldolase (276 aa).

Belongs to the KdsA family.

The protein resides in the cytoplasm. It catalyses the reaction D-arabinose 5-phosphate + phosphoenolpyruvate + H2O = 3-deoxy-alpha-D-manno-2-octulosonate-8-phosphate + phosphate. The protein operates within carbohydrate biosynthesis; 3-deoxy-D-manno-octulosonate biosynthesis; 3-deoxy-D-manno-octulosonate from D-ribulose 5-phosphate: step 2/3. Its pathway is bacterial outer membrane biogenesis; lipopolysaccharide biosynthesis. In Stenotrophomonas maltophilia (strain R551-3), this protein is 2-dehydro-3-deoxyphosphooctonate aldolase.